The sequence spans 160 residues: Major pollen allergen Bet v 1-J (160 aa).

Lysine 55, tyrosine 82, tyrosine 84, and asparagine 101 together coordinate brassinolide. Hydrophobic ligand pocket regions lie at residues 116 to 118 and 133 to 141; these read KIN and QIKASKEMG.

This sequence belongs to the BetVI family. As to expression, pollen.

Its subcellular location is the cytoplasm. Its function is as follows. May be a general steroid carrier protein. The sequence is that of Major pollen allergen Bet v 1-J from Betula pendula (European white birch).